Here is a 172-residue protein sequence, read N- to C-terminus: Adenine phosphoribosyltransferase (172 aa).

It belongs to the purine/pyrimidine phosphoribosyltransferase family. Homodimer.

It localises to the cytoplasm. The catalysed reaction is AMP + diphosphate = 5-phospho-alpha-D-ribose 1-diphosphate + adenine. It participates in purine metabolism; AMP biosynthesis via salvage pathway; AMP from adenine: step 1/1. Catalyzes a salvage reaction resulting in the formation of AMP, that is energically less costly than de novo synthesis. This Staphylococcus saprophyticus subsp. saprophyticus (strain ATCC 15305 / DSM 20229 / NCIMB 8711 / NCTC 7292 / S-41) protein is Adenine phosphoribosyltransferase.